The following is a 203-amino-acid chain: ATP-dependent Clp protease proteolytic subunit (203 aa).

Ser-107 acts as the Nucleophile in catalysis. Residue His-132 is part of the active site.

Belongs to the peptidase S14 family. In terms of assembly, fourteen ClpP subunits assemble into 2 heptameric rings which stack back to back to give a disk-like structure with a central cavity, resembling the structure of eukaryotic proteasomes.

Its subcellular location is the cytoplasm. It catalyses the reaction Hydrolysis of proteins to small peptides in the presence of ATP and magnesium. alpha-casein is the usual test substrate. In the absence of ATP, only oligopeptides shorter than five residues are hydrolyzed (such as succinyl-Leu-Tyr-|-NHMec, and Leu-Tyr-Leu-|-Tyr-Trp, in which cleavage of the -Tyr-|-Leu- and -Tyr-|-Trp bonds also occurs).. Its function is as follows. Cleaves peptides in various proteins in a process that requires ATP hydrolysis. Has a chymotrypsin-like activity. Plays a major role in the degradation of misfolded proteins. This is ATP-dependent Clp protease proteolytic subunit from Shewanella halifaxensis (strain HAW-EB4).